A 227-amino-acid chain; its full sequence is Large ribosomal subunit protein uL3 (227 aa).

An N5-methylglutamine modification is found at Q151.

The protein belongs to the universal ribosomal protein uL3 family. In terms of assembly, part of the 50S ribosomal subunit. Forms a cluster with proteins L14 and L19. Post-translationally, methylated by PrmB.

One of the primary rRNA binding proteins, it binds directly near the 3'-end of the 23S rRNA, where it nucleates assembly of the 50S subunit. The sequence is that of Large ribosomal subunit protein uL3 from Gluconobacter oxydans (strain 621H) (Gluconobacter suboxydans).